A 453-amino-acid chain; its full sequence is UDP-N-acetylmuramate--L-alanine ligase (453 aa).

112-118 (GTHGKTT) is an ATP binding site.

It belongs to the MurCDEF family.

The protein localises to the cytoplasm. It catalyses the reaction UDP-N-acetyl-alpha-D-muramate + L-alanine + ATP = UDP-N-acetyl-alpha-D-muramoyl-L-alanine + ADP + phosphate + H(+). The protein operates within cell wall biogenesis; peptidoglycan biosynthesis. In terms of biological role, cell wall formation. This chain is UDP-N-acetylmuramate--L-alanine ligase, found in Bdellovibrio bacteriovorus (strain ATCC 15356 / DSM 50701 / NCIMB 9529 / HD100).